Reading from the N-terminus, the 356-residue chain is Uroporphyrinogen decarboxylase (356 aa).

Substrate-binding positions include 27 to 31 (RQAGR), Asp77, Tyr154, Ser209, and His327.

The protein belongs to the uroporphyrinogen decarboxylase family. In terms of assembly, homodimer.

It localises to the cytoplasm. The catalysed reaction is uroporphyrinogen III + 4 H(+) = coproporphyrinogen III + 4 CO2. It participates in porphyrin-containing compound metabolism; protoporphyrin-IX biosynthesis; coproporphyrinogen-III from 5-aminolevulinate: step 4/4. In terms of biological role, catalyzes the decarboxylation of four acetate groups of uroporphyrinogen-III to yield coproporphyrinogen-III. This is Uroporphyrinogen decarboxylase from Aromatoleum aromaticum (strain DSM 19018 / LMG 30748 / EbN1) (Azoarcus sp. (strain EbN1)).